Here is a 149-residue protein sequence, read N- to C-terminus: Myoglobin (149 aa).

Threonine 2 is modified (N-acetylthreonine). The Globin domain occupies 2-143; that stretch reads TEWEHVNKVW…ICSDLETLYK (142 aa). Histidine 60 is a nitrite binding site. Histidine 60 provides a ligand contact to O2. Histidine 89 provides a ligand contact to heme b.

The protein belongs to the globin family. As to quaternary structure, monomeric.

It is found in the cytoplasm. The protein localises to the sarcoplasm. It catalyses the reaction Fe(III)-heme b-[protein] + nitric oxide + H2O = Fe(II)-heme b-[protein] + nitrite + 2 H(+). It carries out the reaction H2O2 + AH2 = A + 2 H2O. Monomeric heme protein which primary function is to store oxygen and facilitate its diffusion within muscle tissues. Reversibly binds oxygen through a pentacoordinated heme iron and enables its timely and efficient release as needed during periods of heightened demand. Depending on the oxidative conditions of tissues and cells, and in addition to its ability to bind oxygen, it also has a nitrite reductase activity whereby it regulates the production of bioactive nitric oxide. Under stress conditions, like hypoxia and anoxia, it also protects cells against reactive oxygen species thanks to its pseudoperoxidase activity. The protein is Myoglobin (mb) of Heterodontus portusjacksoni (Port Jackson shark).